Consider the following 320-residue polypeptide: Cytosolic Fe-S cluster assembly factor NUBP1 (320 aa).

M1 carries the N-acetylmethionine modification. Residues C8, C22, C25, and C31 each contribute to the [4Fe-4S] cluster site. 62 to 69 provides a ligand contact to ATP; sequence GKGGVGKS. [4Fe-4S] cluster-binding residues include C235 and C238. Position 319 is a phosphoserine (S319).

This sequence belongs to the Mrp/NBP35 ATP-binding proteins family. NUBP1/NBP35 subfamily. As to quaternary structure, heterotetramer of 2 NUBP1 and 2 NUBP2 chains. Interacts with KIFC1. Interacts with NUBP2. Interacts with the BBS/CCT complex subunit CCT1. It depends on [4Fe-4S] cluster as a cofactor.

The protein localises to the cytoplasm. The protein resides in the nucleus. It localises to the cell projection. It is found in the cytoskeleton. Its subcellular location is the cilium axoneme. The protein localises to the cilium basal body. The protein resides in the microtubule organizing center. It localises to the centrosome. It is found in the centriole. In terms of biological role, component of the cytosolic iron-sulfur (Fe/S) protein assembly (CIA) machinery. Required for maturation of extramitochondrial Fe-S proteins. The NUBP1-NUBP2 heterotetramer forms a Fe-S scaffold complex, mediating the de novo assembly of an Fe-S cluster and its transfer to target apoproteins. Implicated in the regulation of centrosome duplication. Negatively regulates cilium formation and structure. The protein is Cytosolic Fe-S cluster assembly factor NUBP1 of Homo sapiens (Human).